A 479-amino-acid chain; its full sequence is BRAP2 RING ZnF UBP domain-containing protein 2 (479 aa).

The RING-type; atypical zinc finger occupies 167–207 (CPVCLERLDQDTGGILTTMCNHSFHCSCISNWPDSSCPVCR). A UBP-type; degenerate zinc finger spans residues 201–294 (SSCPVCRYCQ…GKLVELNSHG (94 aa)). Zn(2+)-binding residues include Cys-218, Cys-221, Cys-230, Cys-233, Cys-238, His-245, His-249, and His-255. Residues 328–442 (NELLQAQLEN…MAQMDGESEV (115 aa)) are a coiled coil. The segment at 434–479 (AQMDGESEVSETKEVQDATVSTTNTSSSGAGNVIHANKKKSNRRKG) is disordered. The segment covering 451 to 466 (ATVSTTNTSSSGAGNV) has biased composition (low complexity). A compositionally biased stretch (basic residues) spans 469–479 (ANKKKSNRRKG).

Component of the heteromeric E3 ligase complex made of BRIZ1 and BRIZ2. Forms heterooligomers with BRIZ1 via coiled-coil domains.

It catalyses the reaction S-ubiquitinyl-[E2 ubiquitin-conjugating enzyme]-L-cysteine + [acceptor protein]-L-lysine = [E2 ubiquitin-conjugating enzyme]-L-cysteine + N(6)-ubiquitinyl-[acceptor protein]-L-lysine.. The protein operates within protein modification; protein ubiquitination. RING-type ubiquitin E3 ligase that binds ubiquitin and is required for seed germination and post-germination growth. The protein is BRAP2 RING ZnF UBP domain-containing protein 2 of Arabidopsis thaliana (Mouse-ear cress).